A 772-amino-acid chain; its full sequence is Endoplasmic reticulum membrane sensor NFE2L1 (772 aa).

The chain crosses the membrane as a helical; Signal-anchor for type II membrane protein span at residues 7 to 24 (YFTEGLIQFTILLSLIGV). Positions 191-199 (IFDYSHRQK) are cholesterol recognition/amino acid consensus (CRAC) region. The segment covering 198–216 (QKESEVDKELSDGRERGDG) has biased composition (basic and acidic residues). The interval 198 to 223 (QKESEVDKELSDGRERGDGWRSAGGQ) is disordered. N-linked (GlcNAc...) asparagine glycosylation is found at Asn332, Asn340, Asn362, Asn402, Asn407, Asn414, Asn425, and Asn429. The segment at 472-531 (EEEFDSDSGLSLDSGHSPASLSSSEASSSSSSSSSSSSSSSSSSSSFSEEGAVGYSSDSE) is disordered. Residues 478-519 (DSGLSLDSGHSPASLSSSEASSSSSSSSSSSSSSSSSSSSFS) are compositionally biased toward low complexity. The N-linked (GlcNAc...) asparagine glycan is linked to Asn574. The segment at 581-613 (PGTLDPEEPKLPSVGKKSSKEKPSEFLDKQMSR) is disordered. Residues 598–613 (SSKEKPSEFLDKQMSR) are compositionally biased toward basic and acidic residues. The bZIP domain maps to 654–717 (LIRDIRRRGK…RQMKQKVQNL (64 aa)). Residues 656-675 (RDIRRRGKNKMAAQNCRKRK) form a basic motif region. The tract at residues 682–696 (LERDVEDLQRDKSKL) is leucine-zipper. Positions 761 to 768 (RRQERKQK) match the Nuclear localization signal motif.

This sequence belongs to the bZIP family. CNC subfamily. Interacts (via the bZIP domain) with small MAF protein (MAFF, MAFG or MAFK); required for binding to antioxidant response elements (AREs) on DNA. Cleaved at Leu-104 following retrotranslocation, releasing the protein from the endoplasmic reticulum membrane and forming the transcription factor NRF1 that translocates into the nucleus.

It is found in the endoplasmic reticulum membrane. It localises to the nucleus. In terms of biological role, endoplasmic reticulum membrane sensor that translocates into the nucleus in response to various stresses to act as a transcription factor. Constitutes a precursor of the transcription factor NRF1. Able to detect various cellular stresses, such as cholesterol excess, oxidative stress or proteasome inhibition. In response to stress, it is released from the endoplasmic reticulum membrane following cleavage and translocates into the nucleus to form the transcription factor NRF1. Acts as a key sensor of cholesterol excess: in excess cholesterol conditions, the endoplasmic reticulum membrane form of the protein directly binds cholesterol via its CRAC motif, preventing cleavage and release of the transcription factor NRF1, thereby allowing expression of genes promoting cholesterol removal. Involved in proteasome homeostasis: in response to proteasome inhibition, it is released from the endoplasmic reticulum membrane, translocates to the nucleus and activates expression of genes encoding proteasome subunits. Functionally, CNC-type bZIP family transcription factor that translocates to the nucleus and regulates expression of target genes in response to various stresses. Heterodimerizes with small-Maf proteins (MAFF, MAFG or MAFK) and binds DNA motifs including the antioxidant response elements (AREs), which regulate expression of genes involved in oxidative stress response. Activates or represses expression of target genes, depending on the context. Plays a key role in cholesterol homeostasis by acting as a sensor of cholesterol excess: in low cholesterol conditions, translocates into the nucleus and represses expression of genes involved in defense against cholesterol excess. In excess cholesterol conditions, the endoplasmic reticulum membrane form of the protein directly binds cholesterol via its CRAC motif, preventing cleavage and release of the transcription factor NRF1, thereby allowing expression of genes promoting cholesterol removal. Critical for redox balance in response to oxidative stress: acts by binding the AREs motifs on promoters and mediating activation of oxidative stress response genes. Involved in proteasome homeostasis: in response to proteasome inhibition, mediates the 'bounce-back' of proteasome subunits by translocating into the nucleus and activating expression of genes encoding proteasome subunits. The polypeptide is Endoplasmic reticulum membrane sensor NFE2L1 (Gallus gallus (Chicken)).